The chain runs to 286 residues: MMKQNPILITGGTGTVGSRIASRLIKLGYRVRIASRKKGALADAEYVYFNWKYASSFTPALEQVKQIYLVAPVGVFDPAPYVLPFLKEAKRLGAKRVVMQSASVVSENGPVFGALHQAVREFPEWTVLRPSYFMQNFINVQHRMSIQTEGRITTASGEGKLGFIDADDIAETAVRALIDDVPHQTHHILTGPEALSYAEAAEIIGAAAGRRVEHVSISRSELQHKMEAGGLPADYAHFMAKLDEAISHGAEHRVTDTVKRVTGKEPRSLSEFAAAHAAYWTSFWTE.

It belongs to the NmrA-type oxidoreductase family.

This is an uncharacterized protein from Bacillus subtilis (strain 168).